Consider the following 219-residue polypeptide: Probable GTP-binding protein EngB (219 aa).

Positions 24–207 constitute an EngB-type G domain; the sequence is VQPEIAFAGR…HELIESWLRP (184 aa). GTP-binding positions include 32–39, 59–63, 81–84, 148–151, and 186–188; these read GRSNAGKS, GRTQH, DLPG, TKCD, and FSA. 2 residues coordinate Mg(2+): S39 and T61.

This sequence belongs to the TRAFAC class TrmE-Era-EngA-EngB-Septin-like GTPase superfamily. EngB GTPase family. It depends on Mg(2+) as a cofactor.

Its function is as follows. Necessary for normal cell division and for the maintenance of normal septation. In Burkholderia cenocepacia (strain HI2424), this protein is Probable GTP-binding protein EngB.